A 245-amino-acid polypeptide reads, in one-letter code: Tyrosine recombinase XerD-like (245 aa).

The 72-residue stretch at 1 to 72 folds into the Core-binding (CB) domain; sequence MITFISKFLA…AVNQFLFFLY (72 aa). The region spanning 90 to 245 is the Tyr recombinase domain; the sequence is PLLTPAYQEV…PVTLEKYFKN (156 aa). Residues K151 and R210 contribute to the active site. Residue Y242 is the O-(3'-phospho-DNA)-tyrosine intermediate of the active site.

This sequence belongs to the 'phage' integrase family. XerD-like subfamily.

Its subcellular location is the cytoplasm. Putative tyrosine recombinase. Not involved in the cutting and rejoining of the recombining DNA molecules on dif(SL) site. This is Tyrosine recombinase XerD-like from Streptococcus mutans serotype c (strain ATCC 700610 / UA159).